The primary structure comprises 177 residues: Shikimate kinase (177 aa).

ATP is bound at residue 17-22; that stretch reads GAGKST. A Mg(2+)-binding site is contributed by serine 21. Residues aspartate 39, arginine 63, and glycine 85 each contribute to the substrate site. Residue arginine 123 coordinates ATP. Substrate is bound at residue arginine 142. ATP is bound at residue arginine 160.

It belongs to the shikimate kinase family. Monomer. It depends on Mg(2+) as a cofactor.

The protein localises to the cytoplasm. It carries out the reaction shikimate + ATP = 3-phosphoshikimate + ADP + H(+). It participates in metabolic intermediate biosynthesis; chorismate biosynthesis; chorismate from D-erythrose 4-phosphate and phosphoenolpyruvate: step 5/7. In terms of biological role, catalyzes the specific phosphorylation of the 3-hydroxyl group of shikimic acid using ATP as a cosubstrate. The sequence is that of Shikimate kinase from Halorhodospira halophila (strain DSM 244 / SL1) (Ectothiorhodospira halophila (strain DSM 244 / SL1)).